The chain runs to 449 residues: Phosphoglucosamine mutase (449 aa).

Catalysis depends on Ser-100, which acts as the Phosphoserine intermediate. Residues Ser-100, Asp-241, Asp-243, and Asp-245 each contribute to the Mg(2+) site. Ser-100 is modified (phosphoserine).

The protein belongs to the phosphohexose mutase family. It depends on Mg(2+) as a cofactor. Post-translationally, activated by phosphorylation.

It catalyses the reaction alpha-D-glucosamine 1-phosphate = D-glucosamine 6-phosphate. Functionally, catalyzes the conversion of glucosamine-6-phosphate to glucosamine-1-phosphate. The chain is Phosphoglucosamine mutase from Clostridium botulinum (strain Langeland / NCTC 10281 / Type F).